Here is a 444-residue protein sequence, read N- to C-terminus: Phosphoglucosamine mutase (444 aa).

The active-site Phosphoserine intermediate is the S100. Residues S100, D234, D236, and D238 each coordinate Mg(2+). S100 is subject to Phosphoserine.

Belongs to the phosphohexose mutase family. It depends on Mg(2+) as a cofactor. Post-translationally, activated by phosphorylation.

It carries out the reaction alpha-D-glucosamine 1-phosphate = D-glucosamine 6-phosphate. Its function is as follows. Catalyzes the conversion of glucosamine-6-phosphate to glucosamine-1-phosphate. The protein is Phosphoglucosamine mutase of Rubrobacter xylanophilus (strain DSM 9941 / JCM 11954 / NBRC 16129 / PRD-1).